The sequence spans 85 residues: Small ribosomal subunit protein uS17 (85 aa).

This sequence belongs to the universal ribosomal protein uS17 family. As to quaternary structure, part of the 30S ribosomal subunit.

Its function is as follows. One of the primary rRNA binding proteins, it binds specifically to the 5'-end of 16S ribosomal RNA. The sequence is that of Small ribosomal subunit protein uS17 from Acetivibrio thermocellus (strain ATCC 27405 / DSM 1237 / JCM 9322 / NBRC 103400 / NCIMB 10682 / NRRL B-4536 / VPI 7372) (Clostridium thermocellum).